Consider the following 795-residue polypeptide: RalBP1-associated Eps domain-containing protein 1 (795 aa).

Residues 10 to 113 form the EH 1 domain; sequence EQKYYSDLFS…SKNEQESRLA (104 aa). Positions 112-238 are disordered; that stretch reads LAASYSSDSE…NWVSFADTPP (127 aa). Over residues 115–126 the composition is skewed to polar residues; that stretch reads SYSSDSENQGSY. Ser145, Ser162, Ser166, and Ser170 each carry phosphoserine. Over residues 156-168 the composition is skewed to low complexity; the sequence is EQQEPVSPVVSPQ. Thr173 carries the post-translational modification Phosphothreonine. Over residues 205–216 the composition is skewed to low complexity; sequence GDAQAGSSAGDA. 2 positions are modified to phosphoserine: Ser272 and Ser273. In terms of domain architecture, EH 2 spans 285–374; that stretch reads QRQYYVNQFK…ESLMPKLIDL (90 aa). At Tyr288 the chain carries Phosphotyrosine. Ser307 is modified (phosphoserine). An EF-hand domain is found at 318–353; it reads LPILELSHIWELSDFDKDGALTLDEFCAAFHLVVAR. Ca(2+)-binding residues include Asp331, Asp333, Asp335, and Glu342. Disordered regions lie at residues 380 to 433 and 469 to 720; these read VGEQ…SSQT and ELKR…DEHT. The segment covering 407-433 has biased composition (polar residues); that stretch reads LNQTWPELNQSSEQWETFSERSSSSQT. Phosphoserine occurs at positions 475, 482, and 489. 2 stretches are compositionally biased toward polar residues: residues 497 to 518 and 525 to 542; these read INSS…SDSF and IGSS…SPDN. Phosphoserine is present on Ser539. Position 543 is a phosphothreonine (Thr543). Pro residues predominate over residues 543-553; sequence TAPPPPPPRPQ. A Phosphoserine modification is found at Ser561. Over residues 562–573 the composition is skewed to polar residues; that stretch reads LDMNRTFAVTTG. A compositionally biased stretch (low complexity) spans 574–583; the sequence is QQQAGVVAHP. A compositionally biased stretch (pro residues) spans 584–595; sequence PAVPPRPQPSQA. Composition is skewed to polar residues over residues 611-622 and 681-692; these read THTSTSPQQIPE and ATNVPANVSKGT. The interval 651 to 795 is interaction with RALBP1; sequence HPEVLPAEKA…LEQLRPFSHL (145 aa). Positions 707-720 are enriched in basic and acidic residues; it reads KSEDELRPDVDEHT. Ser708 and Ser739 each carry phosphoserine. A coiled-coil region spans residues 750–790; it reads SIRRNKETNTVLARLNSELQQQLKDVLEERISLEVQLEQLR.

In terms of assembly, homodimer (Potential). Interacts with RALBP1, CRK and GRB2. Binding to RALBP1 does not affect its Ral-binding activity. Forms a complex with the SH3 domains of CRK and GRB2 which may link it to an EGF-responsive tyrosine kinase. Interacts with RAB11FIP2. Interacts with AMPH, ITSN1 (via SH3 domains) and SGIP1; may be involved in clathrin-mediated endocytosis. In terms of processing, EGF stimulates phosphorylation on Tyr-residues. In terms of tissue distribution, expressed in all tissues examined. The highest level expression was found in the kidney and testis.

Its subcellular location is the membrane. It is found in the clathrin-coated pit. May coordinate the cellular actions of activated EGF receptors and Ral-GTPases. The sequence is that of RalBP1-associated Eps domain-containing protein 1 (Reps1) from Mus musculus (Mouse).